The following is a 629-amino-acid chain: ATP-dependent RNA helicase DeaD (629 aa).

Positions 6–34 (TTFADLGLKAPILEALNDLGYEKPSPIQA) match the Q motif motif. One can recognise a Helicase ATP-binding domain in the interval 37–208 (IPHLLNGRDV…RRFMKEPQEV (172 aa)). 50–57 (AQTGSGKT) is an ATP binding site. The DEAD box signature appears at 156 to 159 (DEAD). Positions 232–379 (KNEALVRFLE…EVELPNAELL (148 aa)) constitute a Helicase C-terminal domain. Disordered stretches follow at residues 438–481 (LIVP…RERR) and 560–629 (LGDA…GGDA). Basic and acidic residues-rich tracts occupy residues 446–481 (MRPK…RERR) and 568–629 (GGER…GGDA).

The protein belongs to the DEAD box helicase family. DeaD/CsdA subfamily. In terms of assembly, interacts with the 50S ribosomal subunit upon shifting to 15 degrees Celsius. Also found associated with the RNA degradosome at 15 degrees Celsius; binds RNase E (rne).

The protein resides in the cytoplasm. It carries out the reaction ATP + H2O = ADP + phosphate + H(+). DEAD-box RNA helicase involved in various cellular processes at low temperature, including ribosome biogenesis, mRNA degradation and translation initiation. Exhibits RNA-stimulated ATP hydrolysis and RNA unwinding activity at low temperature. Involved in 50S ribosomal subunit assembly, acting after SrmB, and could also play a role in the biogenesis of the 30S ribosomal subunit. In addition, is involved in mRNA decay, via formation of a cold-shock degradosome with RNase E. Also stimulates translation of some mRNAs, probably at the level of initiation. This is ATP-dependent RNA helicase DeaD from Escherichia coli (strain K12).